Here is a 715-residue protein sequence, read N- to C-terminus: Polyribonucleotide nucleotidyltransferase (715 aa).

Mg(2+) is bound by residues D488 and D494. The region spanning 555 to 614 is the KH domain; that stretch reads PRIEVMHIPTDKIRDVIGTGGKVIREIVEKTGAKINIEDDGTVKIASSNGKEIEAARKWI. The 69-residue stretch at 624 to 692 folds into the S1 motif domain; the sequence is GEIYEGTVVK…ERGKVRLSMK (69 aa).

Belongs to the polyribonucleotide nucleotidyltransferase family. Mg(2+) serves as cofactor.

It is found in the cytoplasm. The catalysed reaction is RNA(n+1) + phosphate = RNA(n) + a ribonucleoside 5'-diphosphate. Functionally, involved in mRNA degradation. Catalyzes the phosphorolysis of single-stranded polyribonucleotides processively in the 3'- to 5'-direction. The protein is Polyribonucleotide nucleotidyltransferase of Chelativorans sp. (strain BNC1).